A 468-amino-acid chain; its full sequence is 6-phospho-beta-galactosidase (468 aa).

Residues glutamine 19, histidine 116, asparagine 159, glutamate 160, and asparagine 297 each contribute to the D-galactose 6-phosphate site. Catalysis depends on glutamate 160, which acts as the Proton donor. Catalysis depends on glutamate 375, which acts as the Nucleophile. Serine 428, tryptophan 429, lysine 435, and tyrosine 437 together coordinate D-galactose 6-phosphate.

The protein belongs to the glycosyl hydrolase 1 family.

It catalyses the reaction a 6-phospho-beta-D-galactoside + H2O = D-galactose 6-phosphate + an alcohol. It participates in carbohydrate metabolism; lactose degradation; D-galactose 6-phosphate and beta-D-glucose from lactose 6-phosphate: step 1/1. The sequence is that of 6-phospho-beta-galactosidase from Streptococcus pyogenes serotype M6 (strain ATCC BAA-946 / MGAS10394).